Consider the following 66-residue polypeptide: Vesicular acetylcholine transporter (66 aa).

The helical transmembrane segment at 1–15 threads the bilayer; sequence GMGLANLLYAPVLLL. The Cytoplasmic segment spans residues 16–66; that stretch reads LRNVGLLTRSRSERDVLLDEPPQGLYDAVRLRERPVSGQDGEPRSPPGPFD. Residues 43 to 66 form a disordered region; the sequence is AVRLRERPVSGQDGEPRSPPGPFD.

Belongs to the major facilitator superfamily. Vesicular transporter family. Interacts with SEC14L1.

Its subcellular location is the cytoplasmic vesicle. The protein resides in the secretory vesicle. It localises to the synaptic vesicle membrane. The catalysed reaction is acetylcholine(out) + 2 H(+)(in) = acetylcholine(in) + 2 H(+)(out). The enzyme catalyses choline(in) + 2 H(+)(out) = choline(out) + 2 H(+)(in). It carries out the reaction serotonin(in) + 2 H(+)(out) = serotonin(out) + 2 H(+)(in). Its function is as follows. Electrogenic antiporter that exchanges one cholinergic neurotransmitter, acetylcholine or choline, with two intravesicular protons across the membrane of synaptic vesicles. Uses the electrochemical proton gradient established by the V-type proton-pump ATPase to store neurotransmitters inside the vesicles prior to their release via exocytosis. Determines cholinergic vesicular quantal size at presynaptic nerve terminals in developing neuro-muscular junctions with an impact on motor neuron differentiation and innervation pattern. Part of forebrain cholinergic system, regulates hippocampal synapse transmissions that underlie spatial memory formation. Can transport serotonin. The protein is Vesicular acetylcholine transporter (SLC18A3) of Macaca fuscata fuscata (Japanese macaque).